A 598-amino-acid polypeptide reads, in one-letter code: IQ calmodulin-binding motif-containing protein 1 (598 aa).

An interaction with BBS1, BBS8 and BBS9 region spans residues M1–V157. Residues Q287–P598 are interaction with CEP290, BBS1, BBS2, BBS4, BBS5, BBS7, BBS8 and BBS9. 4 IQ domains span residues L294–L317, P318–E338, E387–E416, and Y417–K437. Residues M336 to L362 are a coiled coil. The segment at A530–P598 is interaction with BBS1, BBS2, BBS4, BBS7, BBS8 and BBS9.

Interacts with calmodulin. Interacts with CEP290/NPHP6; IQCB1/NPHP5 and CEP290/NPHP6; are proposed to form a functional NPHP5-6 module localized to the centrosome. Interacts with ATXN10. Interacts with NPHP1, INVS, NPHP4 and RPGRIP1L; these interactions likely require additional interactors. Associates with the BBSome complex; interacts with BBS1, BBS2, BBS4, BBS5, BBS7, BBS8 and BBS9. As to expression, localized to the outer segment and connecting cilia of photoreceptor cells.

Its subcellular location is the cytoplasm. The protein localises to the cytoskeleton. The protein resides in the microtubule organizing center. It localises to the centrosome. Its function is as follows. Involved in ciliogenesis. The function in an early step in cilia formation depends on its association with CEP290/NPHP6. Involved in regulation of the BBSome complex integrity, specifically for presence of BBS2 and BBS5 in the complex, and in ciliary targeting of selected BBSome cargos. May play a role in controlling entry of the BBSome complex to cilia possibly implicating CEP290/NPHP6. In Mus musculus (Mouse), this protein is IQ calmodulin-binding motif-containing protein 1 (Iqcb1).